A 210-amino-acid polypeptide reads, in one-letter code: LexA repressor (210 aa).

Positions 31–51 form a DNA-binding region, H-T-H motif; sequence RAEISRELGFRSPNAAEEHLK. Residues Ser126 and Lys163 each act as for autocatalytic cleavage activity in the active site.

This sequence belongs to the peptidase S24 family. Homodimer.

The catalysed reaction is Hydrolysis of Ala-|-Gly bond in repressor LexA.. In terms of biological role, represses a number of genes involved in the response to DNA damage (SOS response), including recA and lexA. In the presence of single-stranded DNA, RecA interacts with LexA causing an autocatalytic cleavage which disrupts the DNA-binding part of LexA, leading to derepression of the SOS regulon and eventually DNA repair. This Actinobacillus succinogenes (strain ATCC 55618 / DSM 22257 / CCUG 43843 / 130Z) protein is LexA repressor.